The primary structure comprises 122 residues: Ribosome-binding factor A (122 aa).

This sequence belongs to the RbfA family. In terms of assembly, monomer. Binds 30S ribosomal subunits, but not 50S ribosomal subunits or 70S ribosomes.

It localises to the cytoplasm. One of several proteins that assist in the late maturation steps of the functional core of the 30S ribosomal subunit. Associates with free 30S ribosomal subunits (but not with 30S subunits that are part of 70S ribosomes or polysomes). Required for efficient processing of 16S rRNA. May interact with the 5'-terminal helix region of 16S rRNA. In Burkholderia thailandensis (strain ATCC 700388 / DSM 13276 / CCUG 48851 / CIP 106301 / E264), this protein is Ribosome-binding factor A.